Consider the following 110-residue polypeptide: Putative UPF0377 protein YIR040C (110 aa).

It belongs to the UPF0377 family.

This is Putative UPF0377 protein YIR040C from Saccharomyces cerevisiae (strain ATCC 204508 / S288c) (Baker's yeast).